The following is a 67-amino-acid chain: Large ribosomal subunit protein uL29 (67 aa).

It belongs to the universal ribosomal protein uL29 family.

The chain is Large ribosomal subunit protein uL29 from Agathobacter rectalis (strain ATCC 33656 / DSM 3377 / JCM 17463 / KCTC 5835 / VPI 0990) (Eubacterium rectale).